Reading from the N-terminus, the 198-residue chain is Ribose 1,5-bisphosphate phosphokinase PhnN (198 aa).

25–32 lines the ATP pocket; the sequence is GPSGAGKD.

It belongs to the ribose 1,5-bisphosphokinase family.

The catalysed reaction is alpha-D-ribose 1,5-bisphosphate + ATP = 5-phospho-alpha-D-ribose 1-diphosphate + ADP. The protein operates within metabolic intermediate biosynthesis; 5-phospho-alpha-D-ribose 1-diphosphate biosynthesis; 5-phospho-alpha-D-ribose 1-diphosphate from D-ribose 5-phosphate (route II): step 3/3. In terms of biological role, catalyzes the phosphorylation of ribose 1,5-bisphosphate to 5-phospho-D-ribosyl alpha-1-diphosphate (PRPP). The protein is Ribose 1,5-bisphosphate phosphokinase PhnN of Bradyrhizobium diazoefficiens (strain JCM 10833 / BCRC 13528 / IAM 13628 / NBRC 14792 / USDA 110).